Reading from the N-terminus, the 333-residue chain is Phenylalanine--tRNA ligase alpha subunit (333 aa).

Glu248 provides a ligand contact to Mg(2+).

This sequence belongs to the class-II aminoacyl-tRNA synthetase family. Phe-tRNA synthetase alpha subunit type 1 subfamily. Tetramer of two alpha and two beta subunits. It depends on Mg(2+) as a cofactor.

Its subcellular location is the cytoplasm. The enzyme catalyses tRNA(Phe) + L-phenylalanine + ATP = L-phenylalanyl-tRNA(Phe) + AMP + diphosphate + H(+). The sequence is that of Phenylalanine--tRNA ligase alpha subunit from Ureaplasma urealyticum serovar 10 (strain ATCC 33699 / Western).